The primary structure comprises 386 residues: Methionine aminopeptidase 1 (386 aa).

Ala2 bears the N-acetylalanine mark. The C6H2-type zinc finger occupies 6 to 59 (TRVCETDGCSSEAKLQCPTCIKLGIQGSYFCSQECFKGSWATHKLLHKKAKDEK). Residues Cys9, Cys14, Cys22, Cys25, Cys36, Cys40, His48, His52, and Lys53 each coordinate Zn(2+). A protein is bound at residue His203. Residues Asp220, Asp231, and His294 each coordinate Zn(2+). A protein is bound at residue His301. Zn(2+)-binding residues include Glu327 and Glu358.

The protein belongs to the peptidase M24A family. Methionine aminopeptidase type 1 subfamily. Associates with the 60S ribosomal subunit of the 80S translational complex. The cofactor is Zn(2+). Requires Co(2+) as cofactor. It depends on Mn(2+) as a cofactor. Fe(2+) serves as cofactor.

The protein resides in the cytoplasm. The catalysed reaction is Release of N-terminal amino acids, preferentially methionine, from peptides and arylamides.. Functionally, cotranslationally removes the N-terminal methionine from nascent proteins. The N-terminal methionine is often cleaved when the second residue in the primary sequence is small and uncharged (Met-Ala-, Cys, Gly, Pro, Ser, Thr, or Val). The chain is Methionine aminopeptidase 1 (Metap1) from Mus musculus (Mouse).